Here is a 140-residue protein sequence, read N- to C-terminus: ATP synthase epsilon chain (140 aa).

Belongs to the ATPase epsilon chain family. As to quaternary structure, F-type ATPases have 2 components, CF(1) - the catalytic core - and CF(0) - the membrane proton channel. CF(1) has five subunits: alpha(3), beta(3), gamma(1), delta(1), epsilon(1). CF(0) has three main subunits: a, b and c.

It is found in the cell inner membrane. In terms of biological role, produces ATP from ADP in the presence of a proton gradient across the membrane. This is ATP synthase epsilon chain from Neisseria meningitidis serogroup C (strain 053442).